We begin with the raw amino-acid sequence, 248 residues long: TPR repeat-containing protein slr0751 (248 aa).

4 TPR repeats span residues 61–94 (PEAI…SPDS), 95–128 (PETH…DRYY), 129–162 (IPPY…DPNR), and 163–196 (YKAY…RPDY).

In Synechocystis sp. (strain ATCC 27184 / PCC 6803 / Kazusa), this protein is TPR repeat-containing protein slr0751.